The chain runs to 661 residues: Phospholipid:diacylglycerol acyltransferase (661 aa).

The interval 1 to 71 is disordered; it reads MGTLFRRNVQ…FDRKRDGNGR (71 aa). The Cytoplasmic portion of the chain corresponds to 1–80; that stretch reads MGTLFRRNVQ…RKRWRDSRRL (80 aa). The segment covering 34–48 has biased composition (basic residues); it reads HIHHQQGLGHKRRRG. 2 short sequence motifs (bipartite nuclear localization signal) span residues 43-50 and 64-71; these read HKRRRGIS and RKRDGNGR. A compositionally biased stretch (basic and acidic residues) spans 54-70; sequence KRNERGKDFDRKRDGNG. The helical transmembrane segment at 81–101 threads the bilayer; that stretch reads IFILGAFLGVLLPFSFGAYHV. The Lumenal portion of the chain corresponds to 102–661; the sequence is HNSDSDLFDN…QWVSQMPFPM (560 aa). Glutamine 162 contributes to the substrate binding site. Positions 322–326 match the GHSXG lipase motif motif; the sequence is GHSMG. Serine 324 serves as the catalytic Acyl-ester intermediate. Methionine 325 contacts substrate. Asparagine 453, asparagine 461, and asparagine 469 each carry an N-linked (GlcNAc...) asparagine glycan. Aspartate 567 acts as the Charge relay system in catalysis. A glycan (N-linked (GlcNAc...) asparagine) is linked at asparagine 594. The active-site Charge relay system is the histidine 618.

Belongs to the AB hydrolase superfamily. Lipase family.

The protein localises to the endoplasmic reticulum membrane. It localises to the nucleus inner membrane. The enzyme catalyses a glycerophospholipid + a 1,2-diacyl-sn-glycerol = a monoacylglycerophospholipid + a triacyl-sn-glycerol. It catalyses the reaction a 1-acyl-sn-glycerol + a 1,2-diacyl-sn-glycero-3-phosphocholine = a 1-acyl-sn-glycero-3-phosphocholine + a 1,2-diacyl-sn-glycerol. It carries out the reaction 1,2-di-(9Z-octadecenoyl)-sn-glycero-3-phosphoethanolamine + 1,2-di-(9Z-octadecenoyl)-sn-glycerol = 1-(9Z-octadecenoyl)-sn-glycero-3-phosphoethanolamine + 1,2,3-tri-(9Z-octadecenoyl)-glycerol. The catalysed reaction is 1,2-di-(9Z-octadecenoyl)-sn-glycerol + 1,2-di-(9Z-octadecenoyl)-sn-glycero-3-phosphocholine = 1,2,3-tri-(9Z-octadecenoyl)-glycerol + 1-(9Z-octadecenoyl)-sn-glycero-3-phosphocholine. The enzyme catalyses 1-(9Z-octadecenoyl)-sn-glycerol + 1,2-di-(9Z-octadecenoyl)-sn-glycero-3-phosphocholine = di-(9Z)-octadecenoylglycerol + 1-(9Z-octadecenoyl)-sn-glycero-3-phosphocholine. It catalyses the reaction 2-(9Z-octadecenoyl)-glycerol + 1,2-di-(9Z-octadecenoyl)-sn-glycero-3-phosphocholine = 1,2-di-(9Z-octadecenoyl)-glycerol + 1-(9Z-octadecenoyl)-sn-glycero-3-phosphocholine. It carries out the reaction 1-(9Z-octadecenoyl)-2-hexadecanoyl-sn-glycero-3-phosphoethanolamine + 1,2-di-(9Z-octadecenoyl)-sn-glycerol = 1,2-di-(9Z)-octadecenoyl-3-hexadecanoyl-sn-glycerol + 1-(9Z-octadecenoyl)-sn-glycero-3-phosphoethanolamine. The catalysed reaction is 1-(9Z-octadecenoyl)-2-octadecanoyl-sn-glycero-3-phosphoethanolamine + 1,2-di-(9Z-octadecenoyl)-sn-glycerol = 1,2-di-(9Z)-octadecenoyl-3-octadecanoyl-sn-glycerol + 1-(9Z-octadecenoyl)-sn-glycero-3-phosphoethanolamine. The enzyme catalyses 1-(9Z)-octadecenoyl-2-(9Z,12Z)-octadecadienoyl-sn-glycero-3-phosphoethanolamine + 1,2-di-(9Z-octadecenoyl)-sn-glycerol = 1,2-di-(9Z)-octadecenoyl-3-(9Z,12Z)-octadecadienoyl-sn-glycerol + 1-(9Z-octadecenoyl)-sn-glycero-3-phosphoethanolamine. Catalyzes triacylglycerol (TAG) formation by an acyl-CoA independent pathway. The enzyme specifically transfers acyl groups from the sn-2 position of a phospholipid to diacylglycerol (DAG), thus forming an sn-1-lysophospholipid. The preferred acyl donors are phosphatidylethanolamine (PE) and phosphatidylcholine (PC). Also capable of using broad acyl donors such as phosphatidic acid (PA), phosphatidylserine (PS), phosphatidylglycerol (PG) and phosphatidylinositol (PI), as well as monogalactosyldiacylglycerol (MGDG), digalactosyldiacylglycerol (DGDG), and acyl-CoA, and it is more likely to use unsaturated acyl donors. As acyl acceptors, it prefers 1,2- over 1,3-diacylglycerol (DAG). Additionally, has esterification activity that can utilize methanol as acyl acceptor to generate fatty acid methyl esters (FAME). Can also utilize ceramide instead of DAG, acylating the ceramides by attaching a fatty acid to the hydroxy group on the first carbon atom of the long-chain base to produce 1-O-acylceramides. Involved in lipid particle synthesis from the endoplasmic reticulum, promoting localized TAG production at discrete ER subdomains. Relocates from the endoplasmic reticulum to a subdomain of the inner nuclear membrane upon nutrient starvation, where it provides a site of TAG synthesis, which is coupled with nuclear membrane remodeling. This chain is Phospholipid:diacylglycerol acyltransferase, found in Saccharomyces cerevisiae (strain ATCC 204508 / S288c) (Baker's yeast).